The primary structure comprises 330 residues: D-alanine--D-alanine ligase (330 aa).

Residues 120–326 (KLWLSALDIP…FKQFLEGIIR (207 aa)) enclose the ATP-grasp domain. ATP is bound at residue 150 to 205 (AFRNWGAVFVKAASQGSSVGCYKVTDAAKLSEAVNAAFGYSDQVLVEKAVRPRELE). Residues Asp-280, Glu-293, and Asn-295 each contribute to the Mg(2+) site.

This sequence belongs to the D-alanine--D-alanine ligase family. Requires Mg(2+) as cofactor. It depends on Mn(2+) as a cofactor.

The protein localises to the cytoplasm. The enzyme catalyses 2 D-alanine + ATP = D-alanyl-D-alanine + ADP + phosphate + H(+). It participates in cell wall biogenesis; peptidoglycan biosynthesis. Cell wall formation. The chain is D-alanine--D-alanine ligase from Tolumonas auensis (strain DSM 9187 / NBRC 110442 / TA 4).